We begin with the raw amino-acid sequence, 640 residues long: 1-deoxy-D-xylulose-5-phosphate synthase (640 aa).

Residues His-75 and Gly-117–Ala-119 contribute to the thiamine diphosphate site. Asp-146 is a Mg(2+) binding site. Residues Ala-147 to Ala-148, Asn-175, and Glu-370 each bind thiamine diphosphate. Asn-175 provides a ligand contact to Mg(2+).

It belongs to the transketolase family. DXPS subfamily. Homodimer. The cofactor is Mg(2+). Thiamine diphosphate serves as cofactor.

The enzyme catalyses D-glyceraldehyde 3-phosphate + pyruvate + H(+) = 1-deoxy-D-xylulose 5-phosphate + CO2. It functions in the pathway metabolic intermediate biosynthesis; 1-deoxy-D-xylulose 5-phosphate biosynthesis; 1-deoxy-D-xylulose 5-phosphate from D-glyceraldehyde 3-phosphate and pyruvate: step 1/1. Catalyzes the acyloin condensation reaction between C atoms 2 and 3 of pyruvate and glyceraldehyde 3-phosphate to yield 1-deoxy-D-xylulose-5-phosphate (DXP). The protein is 1-deoxy-D-xylulose-5-phosphate synthase of Chlamydia trachomatis serovar D (strain ATCC VR-885 / DSM 19411 / UW-3/Cx).